A 501-amino-acid chain; its full sequence is Probable sucrose utilization protein SUC1 (501 aa).

Positions 13-39 form a DNA-binding region, zn(2)-C6 fungal-type; the sequence is CDSCSFRKVKCDMKTPCSRCVLNNLKC.

It belongs to the MAL13 family.

The protein resides in the nucleus. Functionally, affects sucrose utilization and alpha-glucosidase activity. Probable transcriptional activator. The polypeptide is Probable sucrose utilization protein SUC1 (SUC1) (Candida albicans (strain SC5314 / ATCC MYA-2876) (Yeast)).